The chain runs to 356 residues: DNA polymerase IV (356 aa).

One can recognise a UmuC domain in the interval 6-187 (IIHVDMDYFF…LDIGDFPGVG (182 aa)). Mg(2+) contacts are provided by aspartate 10 and aspartate 105. Glutamate 106 is a catalytic residue.

It belongs to the DNA polymerase type-Y family. In terms of assembly, monomer. Requires Mg(2+) as cofactor.

It localises to the cytoplasm. It catalyses the reaction DNA(n) + a 2'-deoxyribonucleoside 5'-triphosphate = DNA(n+1) + diphosphate. Functionally, poorly processive, error-prone DNA polymerase involved in untargeted mutagenesis. Copies undamaged DNA at stalled replication forks, which arise in vivo from mismatched or misaligned primer ends. These misaligned primers can be extended by PolIV. Exhibits no 3'-5' exonuclease (proofreading) activity. May be involved in translesional synthesis, in conjunction with the beta clamp from PolIII. The sequence is that of DNA polymerase IV from Staphylococcus saprophyticus subsp. saprophyticus (strain ATCC 15305 / DSM 20229 / NCIMB 8711 / NCTC 7292 / S-41).